Consider the following 229-residue polypeptide: MSLLEQLDKNIAASGGLIVSCQPVPGSPLDKPEIVAAMALAAEQAGAVAVRIEGIDNLRVARSLVSVPIIGIIKRDLDDSPVRITPFLDDVDALAQAGAAIIAVDGTARQRPVAVEALLARIHHHHLLAMADCSSVDDGLACQRLGADIIGTTMSGYTTPDTPEEPDLPLVKALHDAGCRVIAEGRYNSPTLAAEAIRYGAWAVTVGSAITRLEHICGWYNDALKKAAS.

Belongs to the NanE family.

It catalyses the reaction an N-acyl-D-glucosamine 6-phosphate = an N-acyl-D-mannosamine 6-phosphate. It participates in amino-sugar metabolism; N-acetylneuraminate degradation; D-fructose 6-phosphate from N-acetylneuraminate: step 3/5. In terms of biological role, converts N-acetylmannosamine-6-phosphate (ManNAc-6-P) to N-acetylglucosamine-6-phosphate (GlcNAc-6-P). In Salmonella paratyphi A (strain ATCC 9150 / SARB42), this protein is Putative N-acetylmannosamine-6-phosphate 2-epimerase 2.